A 73-amino-acid polypeptide reads, in one-letter code: Photosystem I reaction center subunit IV (73 aa).

It belongs to the PsaE family.

Its subcellular location is the cellular thylakoid membrane. In terms of biological role, stabilizes the interaction between PsaC and the PSI core, assists the docking of the ferredoxin to PSI and interacts with ferredoxin-NADP oxidoreductase. The protein is Photosystem I reaction center subunit IV of Synechococcus sp. (strain JA-3-3Ab) (Cyanobacteria bacterium Yellowstone A-Prime).